A 202-amino-acid chain; its full sequence is Holliday junction resolvase RecU (202 aa).

Positions 85, 87, 100, and 119 each coordinate Mg(2+).

This sequence belongs to the RecU family. Mg(2+) serves as cofactor.

Its subcellular location is the cytoplasm. It carries out the reaction Endonucleolytic cleavage at a junction such as a reciprocal single-stranded crossover between two homologous DNA duplexes (Holliday junction).. Its function is as follows. Endonuclease that resolves Holliday junction intermediates in genetic recombination. Cleaves mobile four-strand junctions by introducing symmetrical nicks in paired strands. Promotes annealing of linear ssDNA with homologous dsDNA. Required for DNA repair, homologous recombination and chromosome segregation. This is Holliday junction resolvase RecU from Streptococcus equi subsp. equi (strain 4047).